A 176-amino-acid polypeptide reads, in one-letter code: Ribosome maturation factor RimM (176 aa).

One can recognise a PRC barrel domain in the interval 97 to 176; that stretch reads EDEFYWRDLI…QILVDWDPDF (80 aa).

Belongs to the RimM family. Binds ribosomal protein uS19.

The protein resides in the cytoplasm. Its function is as follows. An accessory protein needed during the final step in the assembly of 30S ribosomal subunit, possibly for assembly of the head region. Essential for efficient processing of 16S rRNA. May be needed both before and after RbfA during the maturation of 16S rRNA. It has affinity for free ribosomal 30S subunits but not for 70S ribosomes. This Shewanella sp. (strain ANA-3) protein is Ribosome maturation factor RimM.